The chain runs to 159 residues: Galactose-specific lectin nattectin (159 aa).

The signal sequence occupies residues 1-21; sequence MASVPHFTVFLFLACALGIGA. A propeptide spanning residues 22–24 is cleaved from the precursor; it reads NVT. 3 disulfide bridges follow: Cys-31–Cys-42, Cys-59–Cys-155, and Cys-132–Cys-147. Residues 38–156 enclose the C-type lectin domain; the sequence is HGSRCFTFHR…CKVKRSFLCA (119 aa). The Ca(2+) site is built by Gln-122, Asp-124, Glu-130, and Asn-143. The Galactose-binding motif lies at 122–124; that stretch reads QPD.

In terms of assembly, monomer. Not glycosylated. In terms of tissue distribution, expressed by the venom gland.

The protein resides in the secreted. Functionally, galactose specific lectin that exhibits hemagglutination activity (minimum hemagluttination concentration = 2.5 ug/well) in a calcium-independent fashion. Has remarkable pro-inflammatory activity, inducing neutrophil mobilization in mice. Plays a crucial role in the innate immune system and chronic manifestations, especially in neutrophil mobilization. The polypeptide is Galactose-specific lectin nattectin (Thalassophryne nattereri (Copper Joe toadfish)).